Consider the following 231-residue polypeptide: MPVRILVVDDDRAVRESLRRSLSFNGYSVELAQDGREALDLIASDRPDAVVLDVMMPRLDGLEVCRQLRSTGDDLPILVLTARDSVSERVAGLDAGADDYLPKPFALEELLARMRALLRRTTPDDGAGESAAMTFSDLSLDPVTREVTRGDRPISLTRTEFSLLEMLIANPRRVLTRSRILEEVWGFDFPTSGNALEVYVGYLRRKTEAEGEPRLIHTVRGVGYVLRETPP.

The Response regulatory domain maps to 4–118 (RILVVDDDRA…ELLARMRALL (115 aa)). Residue Asp-48 is modified to 4-aspartylphosphate. The segment at residues 130-228 (SAAMTFSDLS…VRGVGYVLRE (99 aa)) is a DNA-binding region (ompR/PhoB-type).

Post-translationally, phosphorylated and dephosphorylated by MprB.

Its subcellular location is the cytoplasm. In terms of biological role, member of the two-component regulatory system MprB/MprA which contributes to maintaining a balance among several systems involved in stress resistance and is required for establishment and maintenance of persistent infection in the host. Functions as a transcriptional regulator that recognizes a 19-bp nucleotide motif comprizing two loosely conserved 8-bp direct DNA-binding motif repeats separated by a 3-bp spacer region. This is Response regulator MprA (mprA) from Mycolicibacterium vanbaalenii (strain DSM 7251 / JCM 13017 / BCRC 16820 / KCTC 9966 / NRRL B-24157 / PYR-1) (Mycobacterium vanbaalenii).